The sequence spans 429 residues: Ribosomal RNA small subunit methyltransferase B (429 aa).

S-adenosyl-L-methionine-binding positions include 254–260, aspartate 277, aspartate 303, and aspartate 322; that span reads CAAPGGK. Catalysis depends on cysteine 375, which acts as the Nucleophile. A disordered region spans residues 397-419; the sequence is ALSETGTPDQPGQQNLPGGEEGD. Positions 400–412 are enriched in polar residues; sequence ETGTPDQPGQQNL.

The protein belongs to the class I-like SAM-binding methyltransferase superfamily. RsmB/NOP family.

The protein localises to the cytoplasm. The catalysed reaction is cytidine(967) in 16S rRNA + S-adenosyl-L-methionine = 5-methylcytidine(967) in 16S rRNA + S-adenosyl-L-homocysteine + H(+). Its function is as follows. Specifically methylates the cytosine at position 967 (m5C967) of 16S rRNA. In Salmonella enteritidis PT4 (strain P125109), this protein is Ribosomal RNA small subunit methyltransferase B.